Consider the following 83-residue polypeptide: ATP synthase subunit 9, mitochondrial (83 aa).

The next 2 helical transmembrane spans lie at 8 to 28 and 45 to 72; these read IGAG…GNVL and SFGY…LISS.

Belongs to the ATPase C chain family. In terms of assembly, F-type ATPases have 2 components, CF(1) - the catalytic core - and CF(0) - the membrane proton channel. CF(1) has five subunits: alpha(3), beta(3), gamma(1), delta(1), epsilon(1). CF(0) has three main subunits: a, b and c.

It is found in the mitochondrion membrane. This protein is one of the chains of the nonenzymatic membrane component (F0) of mitochondrial ATPase. The chain is ATP synthase subunit 9, mitochondrial (ATP9) from Helianthus annuus (Common sunflower).